The sequence spans 259 residues: Haloacid dehalogenase-like hydrolase domain-containing protein 2 (259 aa).

The Mg(2+) site is built by Asp13 and Ser15. Substrate is bound by residues 13 to 15 (DLS) and 46 to 47 (TN). Positions 49 to 71 (TKESKRDLLERLRKLEFDISEEE) form a coiled coil. Residue Lys50 is modified to N6-succinyllysine. Residue Lys179 coordinates substrate. A Mg(2+)-binding site is contributed by Asp204.

This sequence belongs to the HAD-like hydrolase superfamily. The cofactor is Mg(2+).

The polypeptide is Haloacid dehalogenase-like hydrolase domain-containing protein 2 (Hdhd2) (Rattus norvegicus (Rat)).